We begin with the raw amino-acid sequence, 483 residues long: Sphingomyelin synthase-related 1 (483 aa).

The next 3 helical transmembrane spans lie at 182–202 (LIAF…MVLV), 230–250 (FDMC…VLFF), and 261–281 (MFSL…ITSL). H330 is an active-site residue. Residues 349-369 (WTGLHTFTWVLNCFAIFLILA) traverse the membrane as a helical segment. Residues H373 and D377 contribute to the active site. A helical membrane pass occupies residues 376 to 396 (IDVFIAFYISSRMFLYYHAYA). The Cytoplasmic segment spans residues 397 to 483 (YNHAGITATD…NSKNHTKKHN (87 aa)). Basic and acidic residues predominate over residues 450–461 (EPKITPKSDSSR). A disordered region spans residues 450–483 (EPKITPKSDSSRKRSSVVAAKQNGNSKNHTKKHN).

This sequence belongs to the sphingomyelin synthase family.

It is found in the membrane. The sequence is that of Sphingomyelin synthase-related 1 from Caenorhabditis elegans.